A 366-amino-acid chain; its full sequence is Holliday junction branch migration complex subunit RuvB (366 aa).

Positions 1–48 (MIDRLMAREAIYQQSNPDPGGDPPEDGPPHGKNAADGGDEPDRGPDPD) are disordered. The interval 21–212 (GDPPEDGPPH…FQIREHLGWY (192 aa)) is large ATPase domain (RuvB-L). Residues L51, R52, G93, K96, T97, T98, 159 to 161 (EDF), R202, Y212, and R249 contribute to the ATP site. T97 is a Mg(2+) binding site. The segment at 213 to 283 (TRKELAEIVL…VCEAALDMIG (71 aa)) is small ATPAse domain (RuvB-S). Positions 286-366 (HLGLDKQDRN…KRQMPDRPLS (81 aa)) are head domain (RuvB-H). The DNA site is built by R341, R343, and R346.

It belongs to the RuvB family. In terms of assembly, homohexamer. Forms an RuvA(8)-RuvB(12)-Holliday junction (HJ) complex. HJ DNA is sandwiched between 2 RuvA tetramers; dsDNA enters through RuvA and exits via RuvB. An RuvB hexamer assembles on each DNA strand where it exits the tetramer. Each RuvB hexamer is contacted by two RuvA subunits (via domain III) on 2 adjacent RuvB subunits; this complex drives branch migration. In the full resolvosome a probable DNA-RuvA(4)-RuvB(12)-RuvC(2) complex forms which resolves the HJ.

It is found in the cytoplasm. The catalysed reaction is ATP + H2O = ADP + phosphate + H(+). Its function is as follows. The RuvA-RuvB-RuvC complex processes Holliday junction (HJ) DNA during genetic recombination and DNA repair, while the RuvA-RuvB complex plays an important role in the rescue of blocked DNA replication forks via replication fork reversal (RFR). RuvA specifically binds to HJ cruciform DNA, conferring on it an open structure. The RuvB hexamer acts as an ATP-dependent pump, pulling dsDNA into and through the RuvAB complex. RuvB forms 2 homohexamers on either side of HJ DNA bound by 1 or 2 RuvA tetramers; 4 subunits per hexamer contact DNA at a time. Coordinated motions by a converter formed by DNA-disengaged RuvB subunits stimulates ATP hydrolysis and nucleotide exchange. Immobilization of the converter enables RuvB to convert the ATP-contained energy into a lever motion, pulling 2 nucleotides of DNA out of the RuvA tetramer per ATP hydrolyzed, thus driving DNA branch migration. The RuvB motors rotate together with the DNA substrate, which together with the progressing nucleotide cycle form the mechanistic basis for DNA recombination by continuous HJ branch migration. Branch migration allows RuvC to scan DNA until it finds its consensus sequence, where it cleaves and resolves cruciform DNA. This chain is Holliday junction branch migration complex subunit RuvB, found in Rhodopirellula baltica (strain DSM 10527 / NCIMB 13988 / SH1).